Consider the following 53-residue polypeptide: Rubredoxin 3 (53 aa).

In terms of domain architecture, Rubredoxin-like spans methionine 1–serine 53. Residues cysteine 6, cysteine 9, cysteine 39, and cysteine 42 each coordinate Fe cation.

Belongs to the rubredoxin family. In terms of assembly, monomer. Fe(3+) is required as a cofactor.

Functionally, functions as an electron acceptor for pyruvate ferredoxin oxidoreductase (PFOR). The polypeptide is Rubredoxin 3 (rub3) (Chlorobaculum tepidum (strain ATCC 49652 / DSM 12025 / NBRC 103806 / TLS) (Chlorobium tepidum)).